The primary structure comprises 157 residues: Ribonuclease H (157 aa).

The RNase H type-1 domain occupies 4–146 (KRTEITIYTD…CDKLAVKASQ (143 aa)). Mg(2+)-binding residues include Asp-13, Glu-51, Asp-73, and Asp-138.

The protein belongs to the RNase H family. Monomer. Mg(2+) is required as a cofactor.

The protein localises to the cytoplasm. The catalysed reaction is Endonucleolytic cleavage to 5'-phosphomonoester.. In terms of biological role, endonuclease that specifically degrades the RNA of RNA-DNA hybrids. This chain is Ribonuclease H, found in Trichodesmium erythraeum (strain IMS101).